The sequence spans 250 residues: 5-oxoprolinase subunit A (250 aa).

This sequence belongs to the LamB/PxpA family. As to quaternary structure, forms a complex composed of PxpA, PxpB and PxpC.

The catalysed reaction is 5-oxo-L-proline + ATP + 2 H2O = L-glutamate + ADP + phosphate + H(+). Its function is as follows. Catalyzes the cleavage of 5-oxoproline to form L-glutamate coupled to the hydrolysis of ATP to ADP and inorganic phosphate. This chain is 5-oxoprolinase subunit A, found in Thermus thermophilus (strain ATCC BAA-163 / DSM 7039 / HB27).